Reading from the N-terminus, the 76-residue chain is RNA-binding protein KhpA (76 aa).

The KH domain occupies 30-76; that stretch reads GEVLEVRVNPEDLGRVIGRSGRTAKALRTLVTALADGRRVRVDVVDD.

This sequence belongs to the KhpA RNA-binding protein family.

The protein resides in the cytoplasm. Functionally, a probable RNA-binding protein. The sequence is that of RNA-binding protein KhpA from Leifsonia xyli subsp. xyli (strain CTCB07).